A 427-amino-acid chain; its full sequence is 3-phosphoshikimate 1-carboxyvinyltransferase (427 aa).

K22, S23, and R27 together coordinate 3-phosphoshikimate. Residue K22 coordinates phosphoenolpyruvate. Residues G96 and R124 each coordinate phosphoenolpyruvate. The 3-phosphoshikimate site is built by S169, S170, Q171, S197, D313, N336, and K340. Q171 lines the phosphoenolpyruvate pocket. D313 acts as the Proton acceptor in catalysis. 3 residues coordinate phosphoenolpyruvate: R344, R386, and K411.

This sequence belongs to the EPSP synthase family. As to quaternary structure, monomer.

The protein localises to the cytoplasm. It catalyses the reaction 3-phosphoshikimate + phosphoenolpyruvate = 5-O-(1-carboxyvinyl)-3-phosphoshikimate + phosphate. It functions in the pathway metabolic intermediate biosynthesis; chorismate biosynthesis; chorismate from D-erythrose 4-phosphate and phosphoenolpyruvate: step 6/7. Functionally, catalyzes the transfer of the enolpyruvyl moiety of phosphoenolpyruvate (PEP) to the 5-hydroxyl of shikimate-3-phosphate (S3P) to produce enolpyruvyl shikimate-3-phosphate and inorganic phosphate. This chain is 3-phosphoshikimate 1-carboxyvinyltransferase, found in Enterobacter sp. (strain 638).